Here is a 258-residue protein sequence, read N- to C-terminus: Imidazole glycerol phosphate synthase subunit HisF (258 aa).

Catalysis depends on residues aspartate 11 and aspartate 130.

It belongs to the HisA/HisF family. In terms of assembly, heterodimer of HisH and HisF.

It is found in the cytoplasm. The enzyme catalyses 5-[(5-phospho-1-deoxy-D-ribulos-1-ylimino)methylamino]-1-(5-phospho-beta-D-ribosyl)imidazole-4-carboxamide + L-glutamine = D-erythro-1-(imidazol-4-yl)glycerol 3-phosphate + 5-amino-1-(5-phospho-beta-D-ribosyl)imidazole-4-carboxamide + L-glutamate + H(+). Its pathway is amino-acid biosynthesis; L-histidine biosynthesis; L-histidine from 5-phospho-alpha-D-ribose 1-diphosphate: step 5/9. Its function is as follows. IGPS catalyzes the conversion of PRFAR and glutamine to IGP, AICAR and glutamate. The HisF subunit catalyzes the cyclization activity that produces IGP and AICAR from PRFAR using the ammonia provided by the HisH subunit. The chain is Imidazole glycerol phosphate synthase subunit HisF from Nitrobacter hamburgensis (strain DSM 10229 / NCIMB 13809 / X14).